Reading from the N-terminus, the 536-residue chain is CTP synthase (536 aa).

Residues methionine 1–leucine 267 form an amidoligase domain region. Position 13 (serine 13) interacts with CTP. Serine 13 lines the UTP pocket. Serine 14–isoleucine 19 contributes to the ATP binding site. Tyrosine 54 lines the L-glutamine pocket. Residue aspartate 71 participates in ATP binding. Positions 71 and 141 each coordinate Mg(2+). CTP-binding positions include aspartate 148–glutamate 150, lysine 188–glutamine 193, and lysine 224. UTP contacts are provided by residues lysine 188–glutamine 193 and lysine 224. Arginine 240–alanine 242 is a binding site for ATP. In terms of domain architecture, Glutamine amidotransferase type-1 spans threonine 293–serine 535. Glycine 355 serves as a coordination point for L-glutamine. The active-site Nucleophile; for glutamine hydrolysis is the cysteine 382. L-glutamine is bound by residues leucine 383–glutamine 386, glutamate 406, and arginine 463. Residues histidine 508 and glutamate 510 contribute to the active site.

It belongs to the CTP synthase family. In terms of assembly, homotetramer.

It catalyses the reaction UTP + L-glutamine + ATP + H2O = CTP + L-glutamate + ADP + phosphate + 2 H(+). It carries out the reaction L-glutamine + H2O = L-glutamate + NH4(+). The catalysed reaction is UTP + NH4(+) + ATP = CTP + ADP + phosphate + 2 H(+). Its pathway is pyrimidine metabolism; CTP biosynthesis via de novo pathway; CTP from UDP: step 2/2. Allosterically activated by GTP, when glutamine is the substrate; GTP has no effect on the reaction when ammonia is the substrate. The allosteric effector GTP functions by stabilizing the protein conformation that binds the tetrahedral intermediate(s) formed during glutamine hydrolysis. Inhibited by the product CTP, via allosteric rather than competitive inhibition. Catalyzes the ATP-dependent amination of UTP to CTP with either L-glutamine or ammonia as the source of nitrogen. Regulates intracellular CTP levels through interactions with the four ribonucleotide triphosphates. In Staphylococcus saprophyticus subsp. saprophyticus (strain ATCC 15305 / DSM 20229 / NCIMB 8711 / NCTC 7292 / S-41), this protein is CTP synthase.